A 419-amino-acid chain; its full sequence is Multiple organellar RNA editing factor 1, mitochondrial (419 aa).

Residues 1–60 (MAMISHRLRRALLTATSYVNRSISSSITPASDFPSVSAAVLKRSVIGRSTEVATRAPARL) constitute a mitochondrion transit peptide. The interval 174–401 (KEYGGDKYEN…AGQPGSDQVR (228 aa)) is disordered. Residues 237 to 252 (GPQQGYATPGQGQGTQ) show a composition bias toward low complexity. The span at 310 to 327 (GQGGSGNYSQGPQGGYNQ) shows a compositional bias: gly residues. Positions 342 to 356 (GPASGAGNLGPAPGA) are enriched in low complexity. The span at 357–367 (GNPGYGQGYSG) shows a compositional bias: gly residues. The segment covering 371 to 401 (EQNQTFPQADQRNRDWNNNNPAGQPGSDQVR) has biased composition (polar residues).

It belongs to the MORF family. Homodimer and heterodimer with MORF3. Heterodimers with MORF8/RIP1, MORF4/RIP4 and MORF6/RIP6. Interacts with PCMP-E90/MEF13. Interacts with PCMP-H13/MEF35.

Its subcellular location is the mitochondrion. Involved in organellar RNA editing. Required for the processing of numerous RNA editing sites in mitochondria. Binds to the mitochondrial MEF19 and MEF21 factors, two pentatricopeptide repeat-containing proteins involved in RNA editing. The protein is Multiple organellar RNA editing factor 1, mitochondrial of Arabidopsis thaliana (Mouse-ear cress).